A 193-amino-acid chain; its full sequence is Ion-translocating oxidoreductase complex subunit A (193 aa).

A run of 6 helical transmembrane segments spans residues 4–24 (FFFI…KFLG), 39–59 (IGMG…SWMV), 71–91 (FLRI…IEVV), 102–122 (ALGI…VALL), 134–154 (LLYG…FAGM), and 167–187 (FAGA…FMGF).

The protein belongs to the NqrDE/RnfAE family. As to quaternary structure, the complex is composed of six subunits: RnfA, RnfB, RnfC, RnfD, RnfE and RnfG.

The protein resides in the cellular chromatophore membrane. Part of a membrane-bound complex that couples electron transfer with translocation of ions across the membrane. This Cereibacter sphaeroides (strain ATCC 17029 / ATH 2.4.9) (Rhodobacter sphaeroides) protein is Ion-translocating oxidoreductase complex subunit A.